A 306-amino-acid polypeptide reads, in one-letter code: MSSVDQIVKTFAKLPEGERNAAVNAILAMMPPGPGPVRQIPEPVSQAPAPKKKVNGFMGFRSYYSPLFSQFPQKARSPFMTILWQHDPFHNEWDFMCSVYSSIRNYLEQSNAQREKKITLQYWLHFAVPVMGVLGRENYLPTLGWDLVTMPNGTIDLMRIAMPLFRKNLQPMNGLCLFTKCQEGGLQVDNQHLVIAKLSDPSYDMIWFNKRPHYQQRHAVQADSSELGVSALFPRNHAVAAEADDVATLQLPHWMQQGDFGTESGYSPQFETLLGSILENGNATSNDSYNMALAMDVPMMGFNGGA.

A DNA-binding region (alpha box) is located at residues A49–R104.

The protein belongs to the MATALPHA1 family.

The protein resides in the nucleus. In terms of biological role, mating type proteins are sequence specific DNA-binding proteins that act as master switches in fungal differentiation by controlling gene expression in a cell type-specific fashion. Transcriptional activator that induces the transcription of alpha-specific genes. The polypeptide is Mating type protein SmtA-1 (SMTA1) (Sordaria macrospora (strain ATCC MYA-333 / DSM 997 / K(L3346) / K-hell)).